We begin with the raw amino-acid sequence, 404 residues long: uncharacterized protein (404 aa).

A compositionally biased stretch (polar residues) spans 1–22 (MASSINNSSQPTVPSISNNSHG). Residues 1–110 (MASSINNSSQ…QQTPVKRRRR (110 aa)) are disordered. Thr-47 carries the post-translational modification Phosphothreonine. Polar residues predominate over residues 87 to 104 (SRGSSLKSHLETESQQTP). Residues 117 to 166 (VDYCSACGGRGLFICCEGCPCSFHLSCLEPPLTPENIPEGSWFCVTCSIK) form a PHD-type zinc finger.

This is an uncharacterized protein from Schizosaccharomyces pombe (strain 972 / ATCC 24843) (Fission yeast).